Reading from the N-terminus, the 54-residue chain is Hemoglobin subunit omega (54 aa).

The region spanning 2–54 is the Globin domain; sequence HWTAEEKQIILAIWAKIDIEEAGAAALSRLLVVYPWTQRYFKNFGNLSSPTAI.

The protein belongs to the globin family.

Functionally, hemoglobin omega chain is an embryonic-type beta-type chain found in prenatal and neonatal marsupials. This is Hemoglobin subunit omega from Notamacropus eugenii (Tammar wallaby).